A 669-amino-acid chain; its full sequence is DNA ligase (669 aa).

NAD(+) contacts are provided by residues 34-38, 83-84, and Glu114; these read DAEYD and SL. Lys116 (N6-AMP-lysine intermediate) is an active-site residue. Residues Arg137, Glu171, Lys287, and Lys311 each coordinate NAD(+). Residues Cys405, Cys408, Cys423, and Cys428 each contribute to the Zn(2+) site. One can recognise a BRCT domain in the interval 591–669; that stretch reads NVESYFAGKT…EERFLQELNK (79 aa).

The protein belongs to the NAD-dependent DNA ligase family. LigA subfamily. Mg(2+) serves as cofactor. Mn(2+) is required as a cofactor.

It catalyses the reaction NAD(+) + (deoxyribonucleotide)n-3'-hydroxyl + 5'-phospho-(deoxyribonucleotide)m = (deoxyribonucleotide)n+m + AMP + beta-nicotinamide D-nucleotide.. Functionally, DNA ligase that catalyzes the formation of phosphodiester linkages between 5'-phosphoryl and 3'-hydroxyl groups in double-stranded DNA using NAD as a coenzyme and as the energy source for the reaction. It is essential for DNA replication and repair of damaged DNA. The polypeptide is DNA ligase (Bacillus cereus (strain ATCC 10987 / NRS 248)).